The chain runs to 280 residues: Putative high affinity immunoglobulin gamma Fc receptor IB (280 aa).

The first 15 residues, 1–15 (MWFLTTLLLWVPVDG), serve as a signal peptide directing secretion. Over 16 to 198 (QVDTTKAVIT…LQLPTPVWFH (183 aa)) the chain is Extracellular. Ig-like C2-type domains lie at 22–101 (AVIT…LEIH) and 95–184 (PIQL…ISQY). Cystine bridges form between cysteine 43-cysteine 85 and cysteine 124-cysteine 168. Residues asparagine 59, asparagine 152, and asparagine 163 are each glycosylated (N-linked (GlcNAc...) asparagine). The helical transmembrane segment at 199 to 219 (VLFYLAVGIMFLVNTVLWVTI) threads the bilayer. At 220 to 280 (RKELKRKKKW…VHRKEPQGAT (61 aa)) the chain is on the cytoplasmic side. The segment at 258–280 (KCQEQKEEQLQEGVHRKEPQGAT) is disordered.

This sequence belongs to the immunoglobulin superfamily. FCGR1 family.

The protein localises to the cell membrane. Functionally, may bind to the Fc region of immunoglobulins gamma with a low affinity compared to FCGR1A. May function in the humoral immune response. This Homo sapiens (Human) protein is Putative high affinity immunoglobulin gamma Fc receptor IB.